Reading from the N-terminus, the 321-residue chain is Probable pectate lyase A (321 aa).

Residues 1–18 form the signal peptide; sequence MKFVATLIACGLSGLALA. Asn-93 carries N-linked (GlcNAc...) asparagine glycosylation. Ca(2+) contacts are provided by Asp-134, Asp-163, and Asp-167. Residue Arg-220 is part of the active site. Asn-238 carries an N-linked (GlcNAc...) asparagine glycan.

It belongs to the polysaccharide lyase 1 family. Ca(2+) serves as cofactor.

Its subcellular location is the secreted. The enzyme catalyses Eliminative cleavage of (1-&gt;4)-alpha-D-galacturonan to give oligosaccharides with 4-deoxy-alpha-D-galact-4-enuronosyl groups at their non-reducing ends.. Pectinolytic enzyme consist of four classes of enzymes: pectin lyase, polygalacturonase, pectin methylesterase and rhamnogalacturonase. Among pectinolytic enzymes, pectin lyase is the most important in depolymerization of pectin, since it cleaves internal glycosidic bonds of highly methylated pectins. Favors pectate, the anion, over pectin, the methyl ester. This is Probable pectate lyase A (plyA) from Neosartorya fischeri (strain ATCC 1020 / DSM 3700 / CBS 544.65 / FGSC A1164 / JCM 1740 / NRRL 181 / WB 181) (Aspergillus fischerianus).